Consider the following 342-residue polypeptide: RNA 3'-terminal phosphate cyclase (342 aa).

ATP is bound by residues Gln-103 and 283 to 287 (YLADQ). His-308 acts as the Tele-AMP-histidine intermediate in catalysis.

Belongs to the RNA 3'-terminal cyclase family. Type 1 subfamily.

Its subcellular location is the cytoplasm. It catalyses the reaction a 3'-end 3'-phospho-ribonucleotide-RNA + ATP = a 3'-end 2',3'-cyclophospho-ribonucleotide-RNA + AMP + diphosphate. In terms of biological role, catalyzes the conversion of 3'-phosphate to a 2',3'-cyclic phosphodiester at the end of RNA. The mechanism of action of the enzyme occurs in 3 steps: (A) adenylation of the enzyme by ATP; (B) transfer of adenylate to an RNA-N3'P to produce RNA-N3'PP5'A; (C) and attack of the adjacent 2'-hydroxyl on the 3'-phosphorus in the diester linkage to produce the cyclic end product. The biological role of this enzyme is unknown but it is likely to function in some aspects of cellular RNA processing. This Escherichia coli O157:H7 protein is RNA 3'-terminal phosphate cyclase (rtcA).